The following is a 567-amino-acid chain: Proline--tRNA ligase (567 aa).

The protein belongs to the class-II aminoacyl-tRNA synthetase family. ProS type 1 subfamily. As to quaternary structure, homodimer.

It is found in the cytoplasm. The enzyme catalyses tRNA(Pro) + L-proline + ATP = L-prolyl-tRNA(Pro) + AMP + diphosphate. In terms of biological role, catalyzes the attachment of proline to tRNA(Pro) in a two-step reaction: proline is first activated by ATP to form Pro-AMP and then transferred to the acceptor end of tRNA(Pro). As ProRS can inadvertently accommodate and process non-cognate amino acids such as alanine and cysteine, to avoid such errors it has two additional distinct editing activities against alanine. One activity is designated as 'pretransfer' editing and involves the tRNA(Pro)-independent hydrolysis of activated Ala-AMP. The other activity is designated 'posttransfer' editing and involves deacylation of mischarged Ala-tRNA(Pro). The misacylated Cys-tRNA(Pro) is not edited by ProRS. This Staphylococcus aureus (strain bovine RF122 / ET3-1) protein is Proline--tRNA ligase.